A 277-amino-acid chain; its full sequence is Alpha carbonic anhydrase 3 (277 aa).

The first 19 residues, 1-19 (MKTIILFVTFLALSSSSLA), serve as a signal peptide directing secretion. The region spanning 24–259 (TEFHYKPGEI…LNGRLVYLNE (236 aa)) is the Alpha-carbonic anhydrase domain. Cys-49 and Cys-209 are disulfide-bonded. Residues Asn-70 and Asn-107 are each glycosylated (N-linked (GlcNAc...) asparagine). Zn(2+) contacts are provided by His-117, His-119, and His-136. 205–206 (TT) provides a ligand contact to substrate. A disordered region spans residues 257-277 (LNEQSSPSPTPRLRIPRVGPV).

The protein belongs to the alpha-class carbonic anhydrase family. Requires Zn(2+) as cofactor. In terms of processing, N-glycosylated. As to expression, expressed in flowers and siliques.

It is found in the plastid. The protein resides in the chloroplast stroma. It catalyses the reaction hydrogencarbonate + H(+) = CO2 + H2O. In terms of biological role, reversible hydration of carbon dioxide. In Arabidopsis thaliana (Mouse-ear cress), this protein is Alpha carbonic anhydrase 3 (ACA3).